Consider the following 494-residue polypeptide: WD repeat-containing protein 37 (494 aa).

2 stretches are compositionally biased toward polar residues: residues 1 to 13 (MPTE…TARQ) and 22 to 31 (SLSIRRTNSS). Positions 1–50 (MPTESASCSTARQTKQKRKSHSLSIRRTNSSEQERTGLPRDMLEGQDSKL) are disordered. The segment covering 32–47 (EQERTGLPRDMLEGQD) has biased composition (basic and acidic residues). WD repeat units follow at residues 154-194 (GHRD…CLVK) and 197-236 (GHVG…PTPQ). Residues 237–265 (PVADTSISGEDEVECSDKDEPDLDGDVSS) form a disordered region. The segment covering 245-263 (GEDEVECSDKDEPDLDGDV) has biased composition (acidic residues). WD repeat units follow at residues 279-318 (SHQG…LVHS), 321-360 (GHDQ…IHSV), 365-403 (GHTD…SPIA), 406-445 (RTDS…LARL), and 452-493 (GHRR…LLQE).

Forms homodimers. Interacts with PACS1. Interacts with PACS2.

Its subcellular location is the cytoplasm. The protein resides in the nucleus. Its function is as follows. Required for normal ER Ca2+ handling in lymphocytes. Together with PACS1, it plays an essential role in stabilizing peripheral lymphocyte populations. In Homo sapiens (Human), this protein is WD repeat-containing protein 37 (WDR37).